Reading from the N-terminus, the 736-residue chain is Elongation factor 2 (736 aa).

The tr-type G domain occupies D19–R262. GTP-binding positions include A28–T35, D94–H98, and N148–D151. H602 bears the Diphthamide mark.

This sequence belongs to the TRAFAC class translation factor GTPase superfamily. Classic translation factor GTPase family. EF-G/EF-2 subfamily.

It is found in the cytoplasm. In terms of biological role, catalyzes the GTP-dependent ribosomal translocation step during translation elongation. During this step, the ribosome changes from the pre-translocational (PRE) to the post-translocational (POST) state as the newly formed A-site-bound peptidyl-tRNA and P-site-bound deacylated tRNA move to the P and E sites, respectively. Catalyzes the coordinated movement of the two tRNA molecules, the mRNA and conformational changes in the ribosome. This is Elongation factor 2 (fusA) from Aeropyrum pernix (strain ATCC 700893 / DSM 11879 / JCM 9820 / NBRC 100138 / K1).